We begin with the raw amino-acid sequence, 21 residues long: Protein IroK (21 aa).

In terms of biological role, possible increased expression of this protein (due to mutations upstream of the start codon) is proposed to be responsible for resistance to 3-hydroxypropionic acid (3-HP). The sequence is that of Protein IroK (iroK) from Escherichia coli (strain K12).